Consider the following 256-residue polypeptide: Beta-fibrinogenase-like (256 aa).

Residues Met-1–Ala-18 form the signal peptide. Residues Gln-19–Leu-24 constitute a propeptide that is removed on maturation. One can recognise a Peptidase S1 domain in the interval Val-25 to Ala-247. Disulfide bonds link Cys-31–Cys-161, Cys-49–Cys-65, Cys-96–Cys-254, Cys-140–Cys-208, Cys-172–Cys-187, and Cys-198–Cys-223. Asn-44 carries an N-linked (GlcNAc...) asparagine glycan. Residue His-64 is the Charge relay system of the active site. 2 N-linked (GlcNAc...) asparagine glycosylation sites follow: Asn-78 and Asn-101. Catalysis depends on Asp-108, which acts as the Charge relay system. Asn-152 carries N-linked (GlcNAc...) asparagine glycosylation. Ser-202 functions as the Charge relay system in the catalytic mechanism.

This sequence belongs to the peptidase S1 family. Snake venom subfamily. In terms of assembly, monomer. In terms of tissue distribution, expressed by the venom gland.

It is found in the secreted. Snake venom serine protease that has fibrinogenolytic activities by hydrolyzing the beta chain of fibrinogen (FGB). Typical arginine esterase which hydrolyzes esters and amides of arginine. The sequence is that of Beta-fibrinogenase-like from Daboia siamensis (Eastern Russel's viper).